Here is a 544-residue protein sequence, read N- to C-terminus: Chaperonin GroEL (544 aa).

ATP contacts are provided by residues 29–32 (TLGP), K50, 86–90 (DGTTT), G413, 479–481 (DAA), and D495.

Belongs to the chaperonin (HSP60) family. In terms of assembly, forms a cylinder of 14 subunits composed of two heptameric rings stacked back-to-back. Interacts with the co-chaperonin GroES.

The protein resides in the cytoplasm. The enzyme catalyses ATP + H2O + a folded polypeptide = ADP + phosphate + an unfolded polypeptide.. Functionally, together with its co-chaperonin GroES, plays an essential role in assisting protein folding. The GroEL-GroES system forms a nano-cage that allows encapsulation of the non-native substrate proteins and provides a physical environment optimized to promote and accelerate protein folding. This is Chaperonin GroEL from Borrelia turicatae (strain 91E135).